The sequence spans 372 residues: Innexin shaking-B (372 aa).

Topologically, residues 1–21 are cytoplasmic; sequence MLDIFRGLKNLVKVSHVKTDS. The helical transmembrane segment at 22-42 threads the bilayer; sequence IVFRLHYSITVMILMSFSLII. Over 43–110 the chain is Extracellular; the sequence is TTRQYVGNPI…PADKKHYKYY (68 aa). A helical membrane pass occupies residues 111–131; that stretch reads QWVCFCLFFQAILFYTPRWLW. Over 132-182 the chain is Cytoplasmic; the sequence is KSWEGGKIHALIMDLDIGICSEAEKKQKKKLLLDYLWENLRYHNWWAYRYY. The chain crosses the membrane as a helical span at residues 183 to 203; the sequence is VCELLALINVIGQMFLMNRFF. The Extracellular portion of the chain corresponds to 204 to 267; sequence DGEFITFGLK…ILPLNVVNEK (64 aa). The chain crosses the membrane as a helical span at residues 268-288; that stretch reads IYIFLWFWFILLTFLTLLTLI. At 289 to 372 the chain is on the cytoplasmic side; sequence YRVVIIFSPR…PGLKGEIQDA (84 aa).

It belongs to the pannexin family. In terms of assembly, monomer (isoform Lethal). In terms of tissue distribution, isoform Neural is expressed in synapses of giant fibers (GF), in a large thoracic cell in location of postsynaptic target and optic lobe lamina and medulla. Isoform Lethal is expressed in embryonic mesodermal derivatives. During metamorphosis, both isoforms are dynamically expressed in pupal nervous system.

It localises to the cell membrane. The protein localises to the cell junction. The protein resides in the gap junction. In terms of biological role, structural component of the gap junctions at electrical synapses in distal and mid-depth levels in the lamina. Isoform Lethal forms voltage sensitive intercellular channels through homotypic interactions. In Drosophila melanogaster (Fruit fly), this protein is Innexin shaking-B (shakB).